The sequence spans 396 residues: MSLPFSQDERDLAAGGILTIDLAALRHNYSAIATRIAPTRTAAVVKADAYGLGASRVAPAFYEAGCRDFFVAHLGEAVALKPFLKPDATLYVLNGLQPGTEAACAREGILPVLNSLEQVENWAALATRLGKKLPALLQFDTGMSRLGLSAKEFDRLLENVTLLSRIDIKFAISHLANGDEPGNAANARQLAKMTALLARLPKLPAALANSGGTFLGKTYYFDLARPGIALYGIDPERQHDFSDKVAHENKKPKHSILPVLPLSARVIQVRDVDKGATVGYGGTYVANGPMRIATIAVGYADGLFRSLSNKGAAFFGDTRLPIIGRVSMDSITLDVTSLPEGTLKLGSLVELIGPHQRLEDVARDCDTIPYEILTALGNRYARVYVYVNGGGTSTTA.

Lysine 46 serves as the catalytic Proton acceptor; specific for D-alanine. Lysine 46 is subject to N6-(pyridoxal phosphate)lysine. Position 145 (arginine 145) interacts with substrate. Tyrosine 280 serves as the catalytic Proton acceptor; specific for L-alanine. Methionine 328 serves as a coordination point for substrate.

Belongs to the alanine racemase family. The cofactor is pyridoxal 5'-phosphate.

It catalyses the reaction L-alanine = D-alanine. It functions in the pathway amino-acid biosynthesis; D-alanine biosynthesis; D-alanine from L-alanine: step 1/1. Functionally, catalyzes the interconversion of L-alanine and D-alanine. May also act on other amino acids. This chain is Alanine racemase (alr), found in Brucella ovis (strain ATCC 25840 / 63/290 / NCTC 10512).